The chain runs to 200 residues: HTH-type transcriptional regulator BetI (200 aa).

In terms of domain architecture, HTH tetR-type spans 8 to 68 (DIRKPQLVQA…ETMREILRQL (61 aa)). A DNA-binding region (H-T-H motif) is located at residues 31–50 (SIALISKEAGVSTGIINHYF).

The protein operates within amine and polyamine biosynthesis; betaine biosynthesis via choline pathway [regulation]. Functionally, repressor involved in the biosynthesis of the osmoprotectant glycine betaine. It represses transcription of the choline transporter BetT and the genes of BetAB involved in the synthesis of glycine betaine. This is HTH-type transcriptional regulator BetI from Vibrio atlanticus (strain LGP32) (Vibrio splendidus (strain Mel32)).